A 271-amino-acid chain; its full sequence is MQHKLIAFIGGGNMAQAIILGLLKQGYPAEQIIVNDPNEEKRAFFANLDVATSENNVGSAIKAEVVLLAVKPQMMAEVCSPLSAVDFSDKLLISIAAGISTERLNALIPSVKSIVRVMPNTPALVGEGMAGLFAPKNTSENYRTFAQDLLGAVGRTVWVNDETQMHAVTAASGSSPAYFFLMLEAMQKALIKMNIDEKTARELVQQSMLGAAKMVTENPQIALSTLRENVTSKGGTTAAALAVFDAQHFNQTIEQAMQACLSRSQEMETLF.

Belongs to the pyrroline-5-carboxylate reductase family.

Its subcellular location is the cytoplasm. It carries out the reaction L-proline + NADP(+) = (S)-1-pyrroline-5-carboxylate + NADPH + 2 H(+). It catalyses the reaction L-proline + NAD(+) = (S)-1-pyrroline-5-carboxylate + NADH + 2 H(+). It functions in the pathway amino-acid biosynthesis; L-proline biosynthesis; L-proline from L-glutamate 5-semialdehyde: step 1/1. Catalyzes the reduction of 1-pyrroline-5-carboxylate (PCA) to L-proline. In Haemophilus influenzae (strain ATCC 51907 / DSM 11121 / KW20 / Rd), this protein is Pyrroline-5-carboxylate reductase.